A 5588-amino-acid chain; its full sequence is Histone-lysine N-methyltransferase 2D (5588 aa).

The segment at 1–61 is disordered; the sequence is MDSQKPPAED…QKPPHDCSRG (61 aa). The segment at 104 to 149 adopts a C2HC pre-PHD-type 1; degenerate zinc-finger fold; sequence GPCEAVLPKEDASQIGFPEGLTPAHLGEPGGHCWAHHWCAAWSAGV. PHD-type zinc fingers lie at residues 170–218 and 270–323; these read QRCS…PEHS and CPEC…CRLC. The PHD-type 2; degenerate zinc-finger motif lies at 226-276; it reads EARCAVCEGPGQLCDLLFCTSCGHHYHGACLDTALTARKRASWQCPECKVC. The segment at 229-274 adopts an RING-type 1; atypical zinc-finger fold; the sequence is CAVCEGPGQLCDLLFCTSCGHHYHGACLDTALTARKRASWQCPECK. An RING-type 2; degenerate zinc finger spans residues 276-321; that stretch reads CQSCRKPGNDSKMLVCETCDKGYHTFCLKPPMEDLPAHSWKCKTCR. 2 disordered regions span residues 438–908 and 922–1315; these read MPLL…SPII and LEYP…DDDT. The tract at residues 439-642 is 15 X 5 AA repeats of S/P-P-P-E/P-E/A; it reads PLLPPPEESP…VSRLSPPPEE (204 aa). Positions 440 to 463 are enriched in pro residues; sequence LLPPPEESPLSPPPEESPTSPPPE. 4 repeat units span residues 442–446, 460–464, 469–473, and 477–481. Low complexity predominate over residues 464–475; that stretch reads ASRLSPPTEESP. Composition is skewed to pro residues over residues 490–512 and 519–560; these read GCPP…PLSP and LSPP…PPPE. Tandem repeats lie at residues 520-524, 529-533, 538-542, and 547-551. Low complexity predominate over residues 561–572; it reads ASRLFPPFEESP. Residues 573-614 are compositionally biased toward pro residues; the sequence is LSPPPEDSPLSPPPEASRLSPPPEDSPMSPPPEDSPMSPPPE. 4 tandem repeats follow at residues 574–578, 583–587, 592–596, and 610–614. Residues 619-636 show a composition bias toward low complexity; that stretch reads LPLPVLSHLSPLPEVSRL. Repeat 15 spans residues 637-641; that stretch reads SPPPE. Pro residues predominate over residues 637-677; it reads SPPPEESPLSPPPEDSPASPPPEASRLSPPPEDSPASPPPE. The span at 696 to 712 shows a compositional bias: low complexity; that stretch reads DSLVSLPMEESPLSPLP. The residue at position 727 (serine 727) is a Phosphoserine. 3 stretches are compositionally biased toward low complexity: residues 735-755, 836-851, and 876-893; these read LCPQ…CLSP, PSQS…FSPS, and LPEE…LSPQ. Composition is skewed to pro residues over residues 894-908, 959-973, and 985-1012; these read LMPP…SPII, EPVP…PGSP, and LPPP…PPAL. A compositionally biased stretch (low complexity) spans 1013–1023; that stretch reads PLSVPSPLSPV. The span at 1033-1045 shows a compositional bias: basic and acidic residues; it reads AELHEMETDKGPE. PHD-type zinc fingers lie at residues 1071–1124, 1121–1171, and 1198–1253; these read PSPA…PMEV, PMEV…SQGD, and LGVS…SPAR. A Phosphoserine modification is found at serine 1107. Positions 1163–1172 are enriched in polar residues; it reads EISNLSQGDA. Residues 1201–1251 form an RING-type 3; atypical zinc finger; it reads STDVSPARDEGSLRLCTDSLPETDDSLLCDTGTATSGGKAEGDKGRRRSSP. Serine 1205 is subject to Phosphoserine. Threonine 1223 carries the phosphothreonine modification. At serine 1226 the chain carries Phosphoserine. Basic residues predominate over residues 1245 to 1258; sequence GRRRSSPARSRIKQ. Serine 1562 is modified (phosphoserine). Disordered regions lie at residues 1566 to 1721, 1751 to 1846, 1886 to 1962, and 2095 to 2641; these read KRRQ…SKLE, GRPG…MESK, GLAL…SLQR, and SADG…QRQR. A compositionally biased stretch (basic and acidic residues) spans 1593–1608; the sequence is PDDKKDGDLDTDDLLK. Residue serine 1627 is modified to Phosphoserine. Over residues 1631–1641 the composition is skewed to basic and acidic residues; that stretch reads ELGKEETEESK. Composition is skewed to basic residues over residues 1658-1668 and 1709-1718; these read RQRKSHTRVKR and KQQRRARKKS. Residues 1762-1782 show a composition bias toward basic and acidic residues; that stretch reads PRADGGSDRKELMTAMHKGDD. At serine 1791 the chain carries Phosphoserine. Residue threonine 1822 is modified to Phosphothreonine. A compositionally biased stretch (basic and acidic residues) spans 1831–1846; sequence DLDRIPTEELPKMESK. Composition is skewed to low complexity over residues 1886–1896 and 1936–1947; these read GLALGSLPSSS and TTPSTPTTPTTE. A compositionally biased stretch (pro residues) spans 2151–2166; the sequence is PTYPPYPSPTGAPAQP. Positions 2170 to 2181 are enriched in low complexity; that stretch reads GTTTRPGTGQPG. Position 2196 is a phosphoserine (serine 2196). Threonine 2197 is modified (phosphothreonine). Lysine 2203 carries the post-translational modification N6-acetyllysine. Residues serine 2217 and serine 2231 each carry the phosphoserine modification. Basic and acidic residues predominate over residues 2237–2249; sequence ESRKSLEVKKEEL. Residues serine 2266, serine 2268, and serine 2299 each carry the phosphoserine modification. Composition is skewed to pro residues over residues 2308–2322 and 2331–2359; these read EPPP…PPSH and YPDP…PPRS. The segment covering 2366 to 2388 has biased composition (low complexity); it reads SRVPASPQSQSSSQSPLTPRPLS. Residues 2470–2486 show a composition bias toward polar residues; the sequence is GQPTNFARSPGTGTFVG. Asymmetric dimethylarginine is present on arginine 2492. Positions 2504 to 2514 are enriched in pro residues; sequence LKPPVPQPGLP. Residues 2546-2557 show a composition bias toward low complexity; that stretch reads PSGSPLGPNSGP. Serine 2597 bears the Phosphoserine mark. A compositionally biased stretch (low complexity) spans 2610–2622; it reads SSSSLATPELSSA. Residues 2627 to 2665 are a coiled coil; the sequence is ISSLSQTELEKQRQRQRLRELLIRQQIQRNTLRQEKETA. The short motif at 2644–2648 is the LXXLL motif 1 element; the sequence is LRELL. Residues 2655-2806 form a disordered region; sequence RNTLRQEKET…QLWQQQQQQQ (152 aa). A compositionally biased stretch (low complexity) spans 2665–2680; it reads AAAAAGAVGPPGNWGA. Composition is skewed to polar residues over residues 2691–2704 and 2739–2748; these read SRGQ…QDRS and PSSMDMNSRQ. Positions 2768–2813 form a coiled coil; that stretch reads LQQQQQQQQQQQQQQQQQQQQQQQQQQQQQLWQQQQQQQQQQQQQA. Positions 2769–2806 are enriched in low complexity; it reads QQQQQQQQQQQQQQQQQQQQQQQQQQQQQLWQQQQQQQ. Arginine 2829 carries the post-translational modification Asymmetric dimethylarginine. Positions 3030 to 3034 match the LXXLL motif 2 motif; that stretch reads LDDLL. A disordered region spans residues 3069–3104; that stretch reads NEKAEREALLRGVEPVSLGPEERPPPAPDNSEPRLT. The residue at position 3071 (lysine 3071) is an N6-acetyllysine. Serine 3122 and serine 3193 each carry phosphoserine. Disordered regions lie at residues 3129-3193 and 3271-3326; these read NTPK…LNPS and QQQQ…QSMV. The span at 3271–3284 shows a compositional bias: low complexity; it reads QQQQQQQQQQQQQQ. The residue at position 3430 (lysine 3430) is an N6-acetyllysine. Disordered regions lie at residues 3460-3496, 3593-3617, 3633-3661, and 3678-3704; these read SGGS…TFAQ, RNKQ…VLAV, LLPA…GGMV, and QQQQ…NLAL. The stretch at 3559–3613 forms a coiled coil; the sequence is EKLKLVTEQQSKIQKQLDQVRKQQKEHTNLMAEYRNKQQQQQQQQQQQQQQQHSA. Residues 3596 to 3610 show a composition bias toward low complexity; that stretch reads QQQQQQQQQQQQQQQ. The stretch at 3712–3747 forms a coiled coil; that stretch reads RLLQERQLQLQQQRMQLAQKLQQQQQQQQQQQQQQH. An Asymmetric dimethylarginine modification is found at arginine 3725. 2 disordered regions span residues 3760–3780 and 3808–3827; these read PGVQ…PSNH and LQQQ…QGPH. 2 coiled-coil regions span residues 3854-3883 and 3912-4052; these read RLLT…QQQQ and SLQQ…QVTL. Residues 4053-4249 form a disordered region; the sequence is GPGLPVKPLQ…QGPPGAGVMP (197 aa). Low complexity-rich tracts occupy residues 4128–4159, 4172–4183, and 4226–4240; these read SQLL…PQPQ, GQQLGSGSSSES, and GSQP…QSGQ. Residue arginine 4255 is modified to Asymmetric dimethylarginine. A Phosphoserine modification is found at serine 4272. An LXXLL motif 3 motif is present at residues 4279–4283; it reads LQALL. Positions 4290–4452 are disordered; that stretch reads QSQAVRQTPP…SSLVPGHLDQ (163 aa). Residues 4294–4305 show a composition bias toward polar residues; the sequence is VRQTPPFQEPGT. Over residues 4307-4322 the composition is skewed to low complexity; that stretch reads PSPLQGLLGCQPQPGG. An LXXLL motif 4 motif is present at residues 4310–4314; it reads LQGLL. Over residues 4379–4391 the composition is skewed to polar residues; it reads QLPSPSAQLTPTH. Serine 4410 is subject to Phosphoserine. Positions 4432-4445 are enriched in polar residues; it reads DNLTEAQKPEQSSL. Residues 4514 to 4518 carry the LXXLL motif 5 motif; it reads LQKLL. Residue lysine 4516 is modified to N6-acetyllysine. Disordered stretches follow at residues 4553–4596, 4664–4716, and 4729–4778; these read LQGT…EDGV, KNNL…EGAL, and AALP…QLGS. Residues 4670 to 4684 show a composition bias toward pro residues; sequence PPTPPSSLPPTPPPS. The residue at position 4789 (serine 4789) is a Phosphoserine. Lysine 4807 participates in a covalent cross-link: Glycyl lysine isopeptide (Lys-Gly) (interchain with G-Cter in SUMO2). The residue at position 4827 (lysine 4827) is an N6-acetyllysine. An RING-type 4; degenerate zinc finger spans residues 4829-4874; that stretch reads KGSEVSVMLTVSAAAAKNLNGVMVAVAELLSMKIPNSYEVLFPDGP. Positions 4877–4908 are disordered; that stretch reads AGLEPKKGEAEGPGGKEKGLSGKGPDTGPDWL. Basic and acidic residues predominate over residues 4879–4896; it reads LEPKKGEAEGPGGKEKGL. Lysine 4931 participates in a covalent cross-link: Glycyl lysine isopeptide (Lys-Gly) (interchain with G-Cter in SUMO2). The interval 4956–5031 is disordered; sequence QLSAPPPEEP…SEDSRPPRLK (76 aa). Over residues 4959-4982 the composition is skewed to pro residues; it reads APPPEEPSPPPSPLAPSPASPPAE. Positions 5017-5027 are enriched in basic and acidic residues; that stretch reads RPPEESEDSRP. The LXXLL motif 6 signature appears at 5041-5045; that stretch reads LRLLL. The C2HC pre-PHD-type 2 zinc finger occupies 5080–5120; that stretch reads NRRCCFCHEEGDGATDGPARLLNLDLDLWVHLNCALWSTEV. The PHD-type 7 zinc finger occupies 5141 to 5188; sequence TKCSLCQRTGATSSCNRMRCPNVYHFACAIRAKCMFFKDKTMLCPVHK. Residues 5226–5286 form the FYR N-terminal domain; the sequence is LHMFRVGGLV…CCYRCSISEN (61 aa). An FYR C-terminal domain is found at 5287 to 5372; the sequence is NGRPEFVIKV…ESCQNYLFRY (86 aa). The WDR5 interaction motif (WIN) motif lies at 5388 to 5393; the sequence is GCARSE. An SET domain is found at 5448–5564; sequence NNVYLARSRI…KGEELTYDYQ (117 aa). S-adenosyl-L-methionine contacts are provided by residues tyrosine 5502 and 5525–5526; that span reads NH. Positions 5528, 5576, 5578, and 5583 each coordinate Zn(2+). The region spanning 5572–5588 is the Post-SET domain; sequence HKIPCHCGAWNCRKWMN.

It belongs to the class V-like SAM-binding methyltransferase superfamily. Histone-lysine methyltransferase family. TRX/MLL subfamily. Component of the MLL2 complex (also named ASCOM complex), at least composed of catalytic subunit KMT2D/MLL2, ASH2L, RBBP5, WDR5, NCOA6, DPY30, KDM6A, PAXIP1/PTIP, PAGR1 and alpha- and beta-tubulin. Forms a core complex with the evolutionary conserved subcomplex WRAD composed of WDR5, RBBP5, ASH2L/ASH2 and DPY30 subunits; WRAD differentially stimulates the methyltransferase activity. Interacts with ESR1; interaction is direct. Interacts (via WIN motif) with WDR5.

Its subcellular location is the nucleus. It catalyses the reaction L-lysyl(4)-[histone H3] + S-adenosyl-L-methionine = N(6)-methyl-L-lysyl(4)-[histone H3] + S-adenosyl-L-homocysteine + H(+). Functionally, histone methyltransferase that catalyzes methyl group transfer from S-adenosyl-L-methionine to the epsilon-amino group of 'Lys-4' of histone H3 (H3K4). Part of chromatin remodeling machinery predominantly forms H3K4me1 methylation marks at active chromatin sites where transcription and DNA repair take place. Acts as a coactivator for estrogen receptor by being recruited by ESR1, thereby activating transcription. This Mus musculus (Mouse) protein is Histone-lysine N-methyltransferase 2D (Kmt2d).